Reading from the N-terminus, the 157-residue chain is Transcription elongation factor GreA (157 aa).

It belongs to the GreA/GreB family.

Necessary for efficient RNA polymerase transcription elongation past template-encoded arresting sites. The arresting sites in DNA have the property of trapping a certain fraction of elongating RNA polymerases that pass through, resulting in locked ternary complexes. Cleavage of the nascent transcript by cleavage factors such as GreA or GreB allows the resumption of elongation from the new 3'terminus. GreA releases sequences of 2 to 3 nucleotides. The protein is Transcription elongation factor GreA of Caulobacter sp. (strain K31).